Here is a 181-residue protein sequence, read N- to C-terminus: HGPRTase-like protein 2 (181 aa).

Belongs to the purine/pyrimidine phosphoribosyltransferase family. Archaeal HPRT subfamily.

May catalyze a purine salvage reaction, the substrate is unknown. The protein is HGPRTase-like protein 2 of Haloterrigena turkmenica (strain ATCC 51198 / DSM 5511 / JCM 9101 / NCIMB 13204 / VKM B-1734 / 4k) (Halococcus turkmenicus).